A 278-amino-acid chain; its full sequence is Diaminopimelate epimerase (278 aa).

Residues Asn11 and Asn63 each contribute to the substrate site. The active-site Proton donor is Cys72. Substrate-binding positions include 73-74, Asn160, Asn193, and 211-212; these read GN and ER. Cys220 acts as the Proton acceptor in catalysis. Residue 221-222 participates in substrate binding; the sequence is GT.

It belongs to the diaminopimelate epimerase family. As to quaternary structure, homodimer.

Its subcellular location is the cytoplasm. The catalysed reaction is (2S,6S)-2,6-diaminopimelate = meso-2,6-diaminopimelate. The protein operates within amino-acid biosynthesis; L-lysine biosynthesis via DAP pathway; DL-2,6-diaminopimelate from LL-2,6-diaminopimelate: step 1/1. Catalyzes the stereoinversion of LL-2,6-diaminopimelate (L,L-DAP) to meso-diaminopimelate (meso-DAP), a precursor of L-lysine and an essential component of the bacterial peptidoglycan. In Desulforudis audaxviator (strain MP104C), this protein is Diaminopimelate epimerase.